The following is a 176-amino-acid chain: Ribosome rescue factor SmrB (176 aa).

The interval 29-51 (TIIQQPKKNTKQKEIKRSNREAS) is disordered. Residues 39–51 (KQKEIKRSNREAS) are compositionally biased toward basic and acidic residues. In terms of domain architecture, Smr spans 97 to 172 (LDMHGMTQQE…GDGALLVLLS (76 aa)).

Belongs to the SmrB family. As to quaternary structure, associates with collided ribosomes, but not with correctly translating polysomes.

Functionally, acts as a ribosome collision sensor. Detects stalled/collided disomes (pairs of ribosomes where the leading ribosome is stalled and a second ribosome has collided with it) and endonucleolytically cleaves mRNA at the 5' boundary of the stalled ribosome. Stalled/collided disomes form a new interface (primarily via the 30S subunits) that binds SmrB. Cleaved mRNA becomes available for tmRNA ligation, leading to ribosomal subunit dissociation and rescue of stalled ribosomes. This is Ribosome rescue factor SmrB from Vibrio parahaemolyticus serotype O3:K6 (strain RIMD 2210633).